The following is a 232-amino-acid chain: Large ribosomal subunit protein uL1 (232 aa).

This sequence belongs to the universal ribosomal protein uL1 family. In terms of assembly, part of the 50S ribosomal subunit.

Its function is as follows. Binds directly to 23S rRNA. The L1 stalk is quite mobile in the ribosome, and is involved in E site tRNA release. Functionally, protein L1 is also a translational repressor protein, it controls the translation of the L11 operon by binding to its mRNA. This chain is Large ribosomal subunit protein uL1, found in Colwellia psychrerythraea (strain 34H / ATCC BAA-681) (Vibrio psychroerythus).